The primary structure comprises 169 residues: Ureidoglycolate lyase (169 aa).

It belongs to the ureidoglycolate lyase family. As to quaternary structure, homodimer. Requires Ni(2+) as cofactor.

It carries out the reaction (S)-ureidoglycolate = urea + glyoxylate. Its pathway is nitrogen metabolism; (S)-allantoin degradation. Functionally, catalyzes the catabolism of the allantoin degradation intermediate (S)-ureidoglycolate, generating urea and glyoxylate. Involved in the utilization of allantoin as nitrogen source. The sequence is that of Ureidoglycolate lyase from Brucella abortus biovar 1 (strain 9-941).